A 1362-amino-acid polypeptide reads, in one-letter code: MSAETGLGTRLRATSVMGDGVEGAQMSGQQQPAQPQPQTPMMQTPPPEIARPNQPKRQTNQLQYLLKTVLKTLWKHQFAWPFQVPVDVVKLNLPDYYKIIKTPMDMGTIKKRLENHFYWNAQECIQDFNTMFTNCYIYNKPGDDIVLMAEALEKLFLQKISEMPQEETELAVVQCKGRGRARKEQDASITPMRTRVLSGSLGDKSAVKPPVTPVSKPATPTPPAVIRAPTPPQTKPQQAHPPAITQAPISFSPIISQDVVVPTTVVPTPVPQPLANHPAVIHTAAQPAKTKKGVKRKADTTTPTTHDPLHESSPLPSDPKPPKAGPRKESGRQIRPIKKTEVPDSQLPAPPDLHPQPAPIAEKDSKTSEQLRYCAGIVREMFSKKHQAYAWPFYKPVDVETLGLHDYCEIIKHPMDLGTIKVKMENCDYKNAQDFASDVRLMFSNCYKYNPPDHEVVIMARKLQDVFEMRFAKMPDEPEEAPAPVPSPAPGPPAPSIKIPPPTSSDTSSDSSSDSESSSDSEEERAQRLAELQEQLKAVHEQLAALSQPQPNKPKKKEREKRKEKHKRKEEVEETRKGRIREPPAKKPKKSVQVSGGTPSIKKEAPPPVTRPARPAPPPAPCESSEEDTQRCRPMSYEEKRQLSLDINKLPGEKLGRVVHIIQSREPSLKNSNPDEIEIDFETLKPSTLRELERYVTSCLRKKRKPQDKIEAPTSGIVKVKSYSSSESESSSESSTSDSEESDPETAPNQKKKGHSGRESRKHHHPMQQPLIAPPPVMKPPSPTLAPSYPPPSSLDSSHPSLHHPLHPANVFEAVMQLPPDLPPHLAGQTEHCSPPHLNQHALTSPPALHNAMPQQPSRPSNRAAALPTKPARPPSASPPLPPPQPHHQPPAHVHHHHHHHHHAQPPHVLLEDDGPPSPHTGLPSYLQQLHKSQQPPTQSPIHSLLTTVKVQSQAPMAAPAQSMRHHQPLVYPPPSSSASPAPSPASSHIHQMQSPPVVPQQQPAGQAPPPPQQQQQQQQQQQHPALQGTLVSSHQHHVQHQQAKQQQVIQHHHHHHPSPRQQKQETYPGGHLREAPSPLLLHSPQVPPYPGLTHPPSPQSVQPKKQEMRGALVLQPQPLVMKEDKRHSPSVRPEGFSPGMRPEPPKVPEVLKGPSHIQPRPDLKPMDGGRPVRPPDQSLPPQGMPEKEKQKQEPKTPVAPKKDLKIKNMGSWAGLMQKPPVTPTSAGKSTSDSFELFRRQAREKEERERALKHQAEQAERMRREQERMRTREDDDVQDQTRKAHEEARRRQEQQQQQQQQHVQSNLPAAPSPAQSSQPIMDQREMARKREQERRRRQAMAPSIDMNFQSELMEIFEQNLFS.

Disordered regions lie at residues 22–57, 200–243, 274–367, 476–639, 699–941, and 953–1349; these read EGAQ…QPKR, SLGD…HPPA, LANH…DSKT, DEPE…SYEE, CLRK…TQSP, and SQAP…MNFQ. A compositionally biased stretch (pro residues) spans 34-49; sequence QPQPQTPMMQTPPPEI. A Bromo 1 domain is found at 57–163; that stretch reads RQTNQLQYLL…KLFLQKISEM (107 aa). Residues 219–234 are compositionally biased toward pro residues; that stretch reads TPTPPAVIRAPTPPQT. Basic and acidic residues predominate over residues 326 to 342; that stretch reads PRKESGRQIRPIKKTEV. Pro residues predominate over residues 348 to 358; that stretch reads PAPPDLHPQPA. A Bromo 2 domain is found at 365–474; sequence SKTSEQLRYC…DVFEMRFAKM (110 aa). The segment covering 481 to 503 has biased composition (pro residues); it reads APAPVPSPAPGPPAPSIKIPPPT. An NPS region region spans residues 503 to 521; the sequence is TSSDTSSDSSSDSESSSDS. Positions 504-516 are enriched in low complexity; that stretch reads SSDTSSDSSSDSE. The interval 542–597 is BID region; the sequence is QLAALSQPQPNKPKKKEREKRKEKHKRKEEVEETRKGRIREPPAKKPKKSVQVSGG. The segment covering 553–568 has biased composition (basic residues); sequence KPKKKEREKRKEKHKR. Positions 569–585 are enriched in basic and acidic residues; the sequence is KEEVEETRKGRIREPPA. Pro residues predominate over residues 606–621; it reads PPPVTRPARPAPPPAP. The NET domain maps to 623–707; that stretch reads ESSEEDTQRC…SCLRKKRKPQ (85 aa). Basic and acidic residues predominate over residues 628-639; that stretch reads DTQRCRPMSYEE. Low complexity predominate over residues 722 to 737; the sequence is SYSSSESESSSESSTS. The segment covering 750-766 has biased composition (basic residues); the sequence is QKKKGHSGRESRKHHHP. 2 stretches are compositionally biased toward pro residues: residues 772 to 793 and 871 to 889; these read IAPP…PPPS and PARP…PHHQ. The segment covering 893-905 has biased composition (basic residues); that stretch reads HVHHHHHHHHHAQ. A compositionally biased stretch (polar residues) spans 926 to 941; the sequence is YLQQLHKSQQPPTQSP. Low complexity-rich tracts occupy residues 953 to 963, 977 to 1006, 1014 to 1028, and 1041 to 1050; these read SQAPMAAPAQS, SSAS…QPAG, QQQQ…PALQ, and HQQAKQQQVI. A C-terminal (CTD) region region spans residues 1061–1361; it reads RQQKQETYPG…LMEIFEQNLF (301 aa). Residues 1086–1099 are compositionally biased toward pro residues; it reads QVPPYPGLTHPPSP. The segment covering 1186 to 1207 has biased composition (basic and acidic residues); it reads PEKEKQKQEPKTPVAPKKDLKI. A compositionally biased stretch (polar residues) spans 1224-1234; it reads PTSAGKSTSDS. The segment covering 1236–1293 has biased composition (basic and acidic residues); it reads ELFRRQAREKEERERALKHQAEQAERMRREQERMRTREDDDVQDQTRKAHEEARRRQE. Over residues 1308–1319 the composition is skewed to low complexity; the sequence is PAAPSPAQSSQP. Residues 1322 to 1334 are compositionally biased toward basic and acidic residues; sequence DQREMARKREQER.

The protein belongs to the BET family.

The protein localises to the nucleus. Its subcellular location is the chromosome. Chromatin reader protein that recognizes and binds acetylated histones and plays a key role in transmission of epigenetic memory across cell divisions and transcription regulation. Remains associated with acetylated chromatin throughout the entire cell cycle and provides epigenetic memory for postmitotic G1 gene transcription by preserving acetylated chromatin status and maintaining high-order chromatin structure. During interphase, plays a key role in regulating the transcription of signal-inducible genes by associating with the P-TEFb complex and recruiting it to promoters. This is Bromodomain-containing protein 4B (brd4-b) from Xenopus laevis (African clawed frog).